Reading from the N-terminus, the 398-residue chain is Subtilisin-like protease CPC735_050320 (398 aa).

The signal sequence occupies residues 1 to 19 (MVFLGKILPLALAALSVNG). Positions 20–117 (AEILSAPGAE…IERDQIMKAS (98 aa)) are excised as a propeptide. Residues 35–115 (YIVVMKEGTS…AYIERDQIMK (81 aa)) form the Inhibitor I9 domain. Residues 127–398 (SWGLARVSSR…NRLINNGVSQ (272 aa)) form the Peptidase S8 domain. Active-site charge relay system residues include Asp-159 and His-190. 2 N-linked (GlcNAc...) asparagine glycosylation sites follow: Asn-220 and Asn-250. Ser-344 functions as the Charge relay system in the catalytic mechanism.

The protein belongs to the peptidase S8 family.

Its subcellular location is the secreted. Secreted subtilisin-like serine protease with keratinolytic activity that contributes to pathogenicity. This Coccidioides posadasii (strain C735) (Valley fever fungus) protein is Subtilisin-like protease CPC735_050320.